The following is a 199-amino-acid chain: NAD(P)H dehydrogenase (quinone) (199 aa).

A Flavodoxin-like domain is found at 4 to 190 (ILVLYYSTYG…DGARFQGRHV (187 aa)). FMN is bound by residues 10-15 (STYGHI) and 78-80 (TRF). Position 12 (Tyr12) interacts with NAD(+). Substrate is bound at residue Trp98. Residues 113–119 (STATQHG) and His134 each bind FMN.

The protein belongs to the WrbA family. Requires FMN as cofactor.

The enzyme catalyses a quinone + NADH + H(+) = a quinol + NAD(+). It catalyses the reaction a quinone + NADPH + H(+) = a quinol + NADP(+). This chain is NAD(P)H dehydrogenase (quinone), found in Rhizorhabdus wittichii (strain DSM 6014 / CCUG 31198 / JCM 15750 / NBRC 105917 / EY 4224 / RW1) (Sphingomonas wittichii).